Reading from the N-terminus, the 257-residue chain is tRNA (guanine-N(7)-)-methyltransferase (257 aa).

The disordered stretch occupies residues 1–58; it reads MQPIEQPGTGPDDITPESQDTNTAESAESGAETGHPRRIRSFVRRAGRTSTGQQRAIN. The span at 16-26 shows a compositional bias: polar residues; sequence PESQDTNTAES. Residues 36 to 47 show a composition bias toward basic residues; sequence PRRIRSFVRRAG. 4 residues coordinate S-adenosyl-L-methionine: Glu89, Glu114, Asp141, and Asp164. The active site involves Asp164. Residue Lys168 coordinates substrate. An interaction with RNA region spans residues 170-175; that stretch reads RHNKRR. Substrate-binding positions include Asp200 and 235–238; that span reads TKFE.

This sequence belongs to the class I-like SAM-binding methyltransferase superfamily. TrmB family.

It catalyses the reaction guanosine(46) in tRNA + S-adenosyl-L-methionine = N(7)-methylguanosine(46) in tRNA + S-adenosyl-L-homocysteine. The protein operates within tRNA modification; N(7)-methylguanine-tRNA biosynthesis. In terms of biological role, catalyzes the formation of N(7)-methylguanine at position 46 (m7G46) in tRNA. In Ralstonia pickettii (strain 12J), this protein is tRNA (guanine-N(7)-)-methyltransferase.